The chain runs to 375 residues: Chaperone protein DnaJ (375 aa).

The 66-residue stretch at Asp5–Gly70 folds into the J domain. A CR-type zinc finger spans residues Gly131–Gln209. Zn(2+) contacts are provided by Cys144, Cys147, Cys161, Cys164, Cys183, Cys186, Cys197, and Cys200. CXXCXGXG motif repeat units follow at residues Cys144–Gly151, Cys161–Gly168, Cys183–Gly190, and Cys197–Gly204.

It belongs to the DnaJ family. In terms of assembly, homodimer. Requires Zn(2+) as cofactor.

The protein resides in the cytoplasm. Its function is as follows. Participates actively in the response to hyperosmotic and heat shock by preventing the aggregation of stress-denatured proteins and by disaggregating proteins, also in an autonomous, DnaK-independent fashion. Unfolded proteins bind initially to DnaJ; upon interaction with the DnaJ-bound protein, DnaK hydrolyzes its bound ATP, resulting in the formation of a stable complex. GrpE releases ADP from DnaK; ATP binding to DnaK triggers the release of the substrate protein, thus completing the reaction cycle. Several rounds of ATP-dependent interactions between DnaJ, DnaK and GrpE are required for fully efficient folding. Also involved, together with DnaK and GrpE, in the DNA replication of plasmids through activation of initiation proteins. In Hahella chejuensis (strain KCTC 2396), this protein is Chaperone protein DnaJ.